The primary structure comprises 140 residues: Vesicle transport protein GOT1 (140 aa).

Transmembrane regions (helical) follow at residues 12–32 (IGLGLTGFGVFFTFLGVIFVF), 35–55 (GLIAMGNILFLAGVTLTIGIN), 71–91 (ISFGLGFLLVVFGWPIFGLLL), and 96–116 (FLVLFSGFWPTLAVFLQRIPL).

This sequence belongs to the GOT1 family. As to quaternary structure, homodimer. No interactions with STL1, STL2, CESA1, CESA3, CESA4, CESA6, CESA7 or CESA8.

The protein localises to the golgi apparatus membrane. Its function is as follows. May be involved in fusion of ER-derived transport vesicles with the Golgi complex. The chain is Vesicle transport protein GOT1 from Arabidopsis thaliana (Mouse-ear cress).